The chain runs to 237 residues: D-aminoacyl-tRNA deacylase (237 aa).

Belongs to the DtdA deacylase family. As to quaternary structure, monomer. The cofactor is Zn(2+).

The catalysed reaction is a D-aminoacyl-tRNA + H2O = a tRNA + a D-alpha-amino acid + H(+). It catalyses the reaction glycyl-tRNA(Ala) + H2O = tRNA(Ala) + glycine + H(+). Its function is as follows. D-aminoacyl-tRNA deacylase with broad substrate specificity. By recycling D-aminoacyl-tRNA to D-amino acids and free tRNA molecules, this enzyme counteracts the toxicity associated with the formation of D-aminoacyl-tRNA entities in vivo. The chain is D-aminoacyl-tRNA deacylase from Saccharolobus islandicus (strain Y.N.15.51 / Yellowstone #2) (Sulfolobus islandicus).